The following is a 48-amino-acid chain: MAEFKSKLNKGHAFTSKCASLVKEQRARLYILRRCATMLCCWYIQGDE.

The chain crosses the membrane as a helical span at residues 7-23; it reads KLNKGHAFTSKCASLVK. A required for DVL/RTFL small polypeptide activity region spans residues 13–44; it reads AFTSKCASLVKEQRARLYILRRCATMLCCWYI.

It belongs to the DVL/RTFL small polypeptides family.

The protein localises to the cell membrane. Functionally, small polypeptide acting as a regulatory molecule which coordinates cellular responses required for differentiation, growth and development, probably by restricting polar cell proliferation in lateral organs and coordinating socket cell recruitment and differentiation at trichome sites. This chain is Small polypeptide DEVIL 22, found in Arabidopsis thaliana (Mouse-ear cress).